The chain runs to 461 residues: Steroidogenic factor 1 (461 aa).

The nuclear receptor DNA-binding region spans 10-85 (DELCPVCGDK…VGMRLEAVRA (76 aa)). An NR C4-type zinc finger spans residues 13–33 (CPVCGDKVSGYHYGLLTCESC). N6-acetyllysine is present on residues Lys34, Lys38, and Lys72. The NR C4-type zinc-finger motif lies at 49–73 (CTESQSCKIDKTLRKRCPFCRFQKC). Lys119 is covalently cross-linked (Glycyl lysine isopeptide (Lys-Gly) (interchain with G-Cter in SUMO)). The disordered stretch occupies residues 119-153 (KLETGPPMGVPPPPPPPPDYMLPPGLHVPEPKGLA). The span at 126–139 (MGVPPPPPPPPDYM) shows a compositional bias: pro residues. A Glycyl lysine isopeptide (Lys-Gly) (interchain with G-Cter in SUMO) cross-link involves residue Lys194. Phosphoserine; by CDK7 is present on Ser203. Positions 222–459 (GVPELILQLL…NLLIEMLQAK (238 aa)) constitute an NR LBD domain. Positions 341, 436, and 440 each coordinate a 1,2-diacyl-sn-glycero-3-phosphocholine.

It belongs to the nuclear hormone receptor family. NR5 subfamily. Binds DNA as a monomer. Part of a complex consisting of SFPQ, NONO and NR5A1. Interacts with NR0B2. Interacts with DGKQ and CDK7. Binds to and activated by HIPK3. In terms of processing, acetylation stimulates the transcriptional activity. Post-translationally, sumoylation reduces CDK7-mediated phosphorylation on Ser-203. Phosphorylated on Ser-203 by CDK7. This phosphorylation promotes transcriptional activity.

Its subcellular location is the nucleus. Its function is as follows. Transcriptional activator. Seems to be essential for sexual differentiation and formation of the primary steroidogenic tissues. Binds to the Ad4 site found in the promoter region of steroidogenic P450 genes such as CYP11A, CYP11B and CYP21B. Also regulates the AMH/Muellerian inhibiting substance gene as well as the AHCH and STAR genes. 5'-YCAAGGYC-3' and 5'-RRAGGTCA-3' are the consensus sequences for the recognition by NR5A1. The SFPQ-NONO-NR5A1 complex binds to the CYP17 promoter and regulates basal and cAMP-dependent transcriptional activity. Binds phospholipids with a phosphatidylinositol (PI) headgroup, in particular PI(3,4)P2 and PI(3,4,5)P3. Activated by the phosphorylation of NR5A1 by HIPK3 leading to increased steroidogenic gene expression upon cAMP signaling pathway stimulation. The sequence is that of Steroidogenic factor 1 (NR5A1) from Equus caballus (Horse).